The chain runs to 327 residues: MDTWMVLLGLQILLLPLLAHCTAPASTLRFVAVGDWGGVPNAPFHTAREMANAKEIARTVQIMGADFIMSLGDNFYFTGVHDANDKRFQETFEDVFSDRALRNIPWYVLAGNHDHLGNVSAQIAYSKISKRWNFPSPYYRLRFKVPRSNITVAIFMLDTVMLCGNSDDFVSQQPEMPRDLGVARTQLSWLKKQLAAAKEDYVLVAGHYPIWSIAEHGPTRCLVKNLRPLLAAYGVTAYLCGHDHNLQYLQDENGVGYVLSGAGNFMDPSVRHQRKVPNGYLRFHYGSEDSLGGFTYVEIGSKEMSITYVEASGKSLFKTSLPRRPRP.

Positions 1 to 22 (MDTWMVLLGLQILLLPLLAHCT) are cleaved as a signal peptide. Asp-35, Asp-73, Tyr-76, and Asn-112 together coordinate Fe cation. N-linked (GlcNAc...) asparagine glycans are attached at residues Asn-118 and Asn-149. Residues Cys-163 and Cys-221 are joined by a disulfide bond. His-207, His-242, and His-244 together coordinate Fe cation.

In terms of assembly, exists either as monomer or, after proteolytic processing, as a dimer of two chains linked by disulfide bond(s). Fe cation serves as cofactor. Characteristic constituent of osteoclasts and some mononuclear preosteoclasts. Preferentially expressed in skeletal tissues.

It localises to the lysosome. The enzyme catalyses a phosphate monoester + H2O = an alcohol + phosphate. May play a role in the process of bone resorption. The osteoclastic trap acts on nucleotide tri- and diphosphates with higher affinity, compared with other substrates. In Rattus norvegicus (Rat), this protein is Tartrate-resistant acid phosphatase type 5 (Acp5).